The following is a 415-amino-acid chain: Serine hydroxymethyltransferase (415 aa).

(6S)-5,6,7,8-tetrahydrofolate is bound by residues Leu-121 and 125–127 (GHL). Lys-229 is modified (N6-(pyridoxal phosphate)lysine). 352 to 354 (TPF) contributes to the (6S)-5,6,7,8-tetrahydrofolate binding site.

This sequence belongs to the SHMT family. Homodimer. It depends on pyridoxal 5'-phosphate as a cofactor.

It localises to the cytoplasm. The enzyme catalyses (6R)-5,10-methylene-5,6,7,8-tetrahydrofolate + glycine + H2O = (6S)-5,6,7,8-tetrahydrofolate + L-serine. It functions in the pathway one-carbon metabolism; tetrahydrofolate interconversion. The protein operates within amino-acid biosynthesis; glycine biosynthesis; glycine from L-serine: step 1/1. Functionally, catalyzes the reversible interconversion of serine and glycine with tetrahydrofolate (THF) serving as the one-carbon carrier. This reaction serves as the major source of one-carbon groups required for the biosynthesis of purines, thymidylate, methionine, and other important biomolecules. Also exhibits THF-independent aldolase activity toward beta-hydroxyamino acids, producing glycine and aldehydes, via a retro-aldol mechanism. The chain is Serine hydroxymethyltransferase from Chromobacterium violaceum (strain ATCC 12472 / DSM 30191 / JCM 1249 / CCUG 213 / NBRC 12614 / NCIMB 9131 / NCTC 9757 / MK).